The chain runs to 482 residues: tRNA sulfurtransferase (482 aa).

In terms of domain architecture, THUMP spans 61 to 165 (AEVLEILTHT…NDRLNQVLAS (105 aa)). ATP is bound by residues 183–184 (LI), Lys-265, Gly-287, and Gln-296. A disulfide bridge links Cys-344 with Cys-456. The region spanning 404-482 (VEEHAIVLDI…GFNNVKVYRP (79 aa)) is the Rhodanese domain. Cys-456 functions as the Cysteine persulfide intermediate in the catalytic mechanism.

The protein belongs to the ThiI family.

It is found in the cytoplasm. The catalysed reaction is [ThiI sulfur-carrier protein]-S-sulfanyl-L-cysteine + a uridine in tRNA + 2 reduced [2Fe-2S]-[ferredoxin] + ATP + H(+) = [ThiI sulfur-carrier protein]-L-cysteine + a 4-thiouridine in tRNA + 2 oxidized [2Fe-2S]-[ferredoxin] + AMP + diphosphate. The enzyme catalyses [ThiS sulfur-carrier protein]-C-terminal Gly-Gly-AMP + S-sulfanyl-L-cysteinyl-[cysteine desulfurase] + AH2 = [ThiS sulfur-carrier protein]-C-terminal-Gly-aminoethanethioate + L-cysteinyl-[cysteine desulfurase] + A + AMP + 2 H(+). It functions in the pathway cofactor biosynthesis; thiamine diphosphate biosynthesis. Functionally, catalyzes the ATP-dependent transfer of a sulfur to tRNA to produce 4-thiouridine in position 8 of tRNAs, which functions as a near-UV photosensor. Also catalyzes the transfer of sulfur to the sulfur carrier protein ThiS, forming ThiS-thiocarboxylate. This is a step in the synthesis of thiazole, in the thiamine biosynthesis pathway. The sulfur is donated as persulfide by IscS. In Vibrio campbellii (strain ATCC BAA-1116), this protein is tRNA sulfurtransferase.